The primary structure comprises 372 residues: Histidine protein methyltransferase 1 homolog (372 aa).

Disordered regions lie at residues 30-55 (SKEL…QFDL) and 68-103 (NAAP…AKEH). Residues 39-49 (QKGEERDRKCS) are compositionally biased toward basic and acidic residues. Polar residues predominate over residues 70 to 87 (APSQDTDSPLSAASSSRN). Ser72 and Ser77 each carry phosphoserine. His154 bears the Tele-methylhistidine; by autocatalysis mark. Residues 168 to 172 (IWECT), Gly195, and 216 to 218 (QDY) contribute to the S-adenosyl-L-methionine site. The Nuclear localization signal signature appears at 247–253 (PDVKRCR). S-adenosyl-L-methionine-binding positions include 268 to 270 (GEW) and Ser293.

The protein belongs to the methyltransferase superfamily. METTL18 family. Interacts with GRWD1 and members of the heat shock protein 90 and 70 families; these proteins may possibly be methylation substrates for the enzyme. In terms of processing, monomethylated at His-154 through automethylation. Automethylation at His-154 positively regulates the methyltransferase activity toward RPL3. Probably methylated on other residues.

Its subcellular location is the cytoplasm. The protein resides in the cytosol. The protein localises to the nucleus. It is found in the nucleolus. It carries out the reaction L-histidyl-[protein] + S-adenosyl-L-methionine = N(tele)-methyl-L-histidyl-[protein] + S-adenosyl-L-homocysteine + H(+). Functionally, protein-L-histidine N-tele-methyltransferase that specifically monomethylates RPL3, thereby regulating translation elongation. Histidine methylation of RPL3 regulates translation elongation by slowing ribosome traversal on tyrosine codons: slower elongation provides enough time for proper folding of synthesized proteins and prevents cellular aggregation of tyrosine-rich proteins. The chain is Histidine protein methyltransferase 1 homolog from Homo sapiens (Human).